A 591-amino-acid polypeptide reads, in one-letter code: Aspartate--tRNA ligase (591 aa).

Residue Glu173 coordinates L-aspartate. Residues 197–200 are aspartate; sequence QLFK. Arg219 contacts L-aspartate. Residues 219 to 221 and Gln228 contribute to the ATP site; that span reads RDE. His448 serves as a coordination point for L-aspartate. Residue Glu482 coordinates ATP. Position 489 (Arg489) interacts with L-aspartate. 534–537 serves as a coordination point for ATP; the sequence is GLDR.

It belongs to the class-II aminoacyl-tRNA synthetase family. Type 1 subfamily. Homodimer.

It localises to the cytoplasm. The catalysed reaction is tRNA(Asp) + L-aspartate + ATP = L-aspartyl-tRNA(Asp) + AMP + diphosphate. Functionally, catalyzes the attachment of L-aspartate to tRNA(Asp) in a two-step reaction: L-aspartate is first activated by ATP to form Asp-AMP and then transferred to the acceptor end of tRNA(Asp). This is Aspartate--tRNA ligase from Shewanella sp. (strain MR-4).